Here is a 379-residue protein sequence, read N- to C-terminus: Proton extrusion protein PxcA (379 aa).

4 consecutive transmembrane segments (helical) span residues 153-173 (TLVS…LQQI), 254-274 (AIKN…VCLF), 300-320 (FVII…GWTV), and 337-357 (FIDL…KYWI).

It belongs to the CemA family.

The protein localises to the cell inner membrane. Functionally, required for H(+) efflux immediately after light irradiation to form a rapid H(+) concentration gradient across the thylakoid membranes. Together with PxcL, contributes to transient H(+) uptake following dark to light transition. This Synechococcus sp. (strain RCC307) protein is Proton extrusion protein PxcA.